Here is a 351-residue protein sequence, read N- to C-terminus: Probable dual-specificity RNA methyltransferase RlmN (351 aa).

The active-site Proton acceptor is the glutamate 92. The Radical SAM core domain occupies 98-332; sequence TDQRLTVCIS…VSLRASRGLD (235 aa). A disulfide bridge connects residues cysteine 105 and cysteine 337. [4Fe-4S] cluster is bound by residues cysteine 112, cysteine 116, and cysteine 119. S-adenosyl-L-methionine contacts are provided by residues 159–160, serine 189, 218–220, and asparagine 294; these read GE and SLH. Cysteine 337 (S-methylcysteine intermediate) is an active-site residue.

This sequence belongs to the radical SAM superfamily. RlmN family. It depends on [4Fe-4S] cluster as a cofactor.

It is found in the cytoplasm. It catalyses the reaction adenosine(2503) in 23S rRNA + 2 reduced [2Fe-2S]-[ferredoxin] + 2 S-adenosyl-L-methionine = 2-methyladenosine(2503) in 23S rRNA + 5'-deoxyadenosine + L-methionine + 2 oxidized [2Fe-2S]-[ferredoxin] + S-adenosyl-L-homocysteine. It carries out the reaction adenosine(37) in tRNA + 2 reduced [2Fe-2S]-[ferredoxin] + 2 S-adenosyl-L-methionine = 2-methyladenosine(37) in tRNA + 5'-deoxyadenosine + L-methionine + 2 oxidized [2Fe-2S]-[ferredoxin] + S-adenosyl-L-homocysteine. Functionally, specifically methylates position 2 of adenine 2503 in 23S rRNA and position 2 of adenine 37 in tRNAs. In Synechococcus sp. (strain CC9902), this protein is Probable dual-specificity RNA methyltransferase RlmN.